Consider the following 84-residue polypeptide: Small ribosomal subunit protein uS17 (84 aa).

This sequence belongs to the universal ribosomal protein uS17 family. In terms of assembly, part of the 30S ribosomal subunit.

In terms of biological role, one of the primary rRNA binding proteins, it binds specifically to the 5'-end of 16S ribosomal RNA. This chain is Small ribosomal subunit protein uS17, found in Enterobacter sp. (strain 638).